A 413-amino-acid polypeptide reads, in one-letter code: N-acylneuraminate cytidylyltransferase (413 aa).

The protein belongs to the CMP-NeuNAc synthase family. The cofactor is Mg(2+). Mn(2+) is required as a cofactor.

It localises to the cytoplasm. The enzyme catalyses an N-acylneuraminate + CTP = a CMP-N-acyl-beta-neuraminate + diphosphate. In terms of biological role, catalyzes the formation of CMP-N-acetylneuraminic acid (CMP-NeuNAc), which is essential for the formation of the capsule. The sequence is that of N-acylneuraminate cytidylyltransferase (neuA) from Streptococcus agalactiae serotype V (strain ATCC BAA-611 / 2603 V/R).